A 460-amino-acid chain; its full sequence is Asparagine--tRNA ligase (460 aa).

The protein belongs to the class-II aminoacyl-tRNA synthetase family. Homodimer.

The protein resides in the cytoplasm. The enzyme catalyses tRNA(Asn) + L-asparagine + ATP = L-asparaginyl-tRNA(Asn) + AMP + diphosphate + H(+). The chain is Asparagine--tRNA ligase from Picosynechococcus sp. (strain ATCC 27264 / PCC 7002 / PR-6) (Agmenellum quadruplicatum).